Reading from the N-terminus, the 260-residue chain is Hemin import ATP-binding protein HmuV (260 aa).

One can recognise an ABC transporter domain in the interval 7 to 243 (IQASNISVTF…ERIEQVYGYS (237 aa)). ATP is bound at residue 39 to 46 (GPNGAGKS).

The protein belongs to the ABC transporter superfamily. Heme (hemin) importer (TC 3.A.1.14.5) family. The complex is composed of two ATP-binding proteins (HmuV), two transmembrane proteins (HmuU) and a solute-binding protein (HmuT).

The protein localises to the cell inner membrane. Part of the ABC transporter complex HmuTUV involved in hemin import. Responsible for energy coupling to the transport system. In Vibrio anguillarum (strain ATCC 68554 / 775) (Listonella anguillarum), this protein is Hemin import ATP-binding protein HmuV.